A 460-amino-acid chain; its full sequence is Argininosuccinate lyase (460 aa).

It belongs to the lyase 1 family. Argininosuccinate lyase subfamily.

Its subcellular location is the cytoplasm. It catalyses the reaction 2-(N(omega)-L-arginino)succinate = fumarate + L-arginine. The protein operates within amino-acid biosynthesis; L-arginine biosynthesis; L-arginine from L-ornithine and carbamoyl phosphate: step 3/3. The polypeptide is Argininosuccinate lyase (Prosthecochloris aestuarii (strain DSM 271 / SK 413)).